A 193-amino-acid chain; its full sequence is Peptidyl-tRNA hydrolase (193 aa).

Y18 provides a ligand contact to tRNA. H23 functions as the Proton acceptor in the catalytic mechanism. 3 residues coordinate tRNA: F69, N71, and N117.

This sequence belongs to the PTH family. As to quaternary structure, monomer.

The protein resides in the cytoplasm. The enzyme catalyses an N-acyl-L-alpha-aminoacyl-tRNA + H2O = an N-acyl-L-amino acid + a tRNA + H(+). Its function is as follows. Hydrolyzes ribosome-free peptidyl-tRNAs (with 1 or more amino acids incorporated), which drop off the ribosome during protein synthesis, or as a result of ribosome stalling. Functionally, catalyzes the release of premature peptidyl moieties from peptidyl-tRNA molecules trapped in stalled 50S ribosomal subunits, and thus maintains levels of free tRNAs and 50S ribosomes. In Teredinibacter turnerae (strain ATCC 39867 / T7901), this protein is Peptidyl-tRNA hydrolase.